Here is a 323-residue protein sequence, read N- to C-terminus: O-phosphoserine sulfhydrylase (323 aa).

Lys51 carries the N6-(pyridoxal phosphate)lysine modification. Pyridoxal 5'-phosphate contacts are provided by residues Asn81 and 184–188; that span reads GTTGT. Arg220 serves as a coordination point for substrate. Ser265 serves as a coordination point for pyridoxal 5'-phosphate.

The protein belongs to the cysteine synthase/cystathionine beta-synthase family. Homodimer. Pyridoxal 5'-phosphate serves as cofactor.

The enzyme catalyses [CysO sulfur-carrier protein]-C-terminal-Gly-aminoethanethioate + O-phospho-L-serine + H(+) = [CysO sulfur-carrier protein]-Gly-NH-CH2-C(O)-S-L-Cys + phosphate. It participates in amino-acid biosynthesis; L-cysteine biosynthesis. In terms of biological role, catalyzes the formation of a covalent CysO-cysteine adduct via a sulfur transfer, using the thiocarboxylated sulfur carrier protein CysO-COSH as sulfur donor and O-phospho-L-serine (OPS) as sulfur acceptor. Can also use sodium sulfide as sulfur donor in vitro, albeit with less efficiency. In Mycobacterium bovis (strain ATCC BAA-935 / AF2122/97), this protein is O-phosphoserine sulfhydrylase (cysM).